A 346-amino-acid chain; its full sequence is UDP-3-O-acylglucosamine N-acyltransferase (346 aa).

The active-site Proton acceptor is the His240.

The protein belongs to the transferase hexapeptide repeat family. LpxD subfamily. As to quaternary structure, homotrimer.

It catalyses the reaction a UDP-3-O-[(3R)-3-hydroxyacyl]-alpha-D-glucosamine + a (3R)-hydroxyacyl-[ACP] = a UDP-2-N,3-O-bis[(3R)-3-hydroxyacyl]-alpha-D-glucosamine + holo-[ACP] + H(+). Its pathway is bacterial outer membrane biogenesis; LPS lipid A biosynthesis. In terms of biological role, catalyzes the N-acylation of UDP-3-O-acylglucosamine using 3-hydroxyacyl-ACP as the acyl donor. Is involved in the biosynthesis of lipid A, a phosphorylated glycolipid that anchors the lipopolysaccharide to the outer membrane of the cell. This chain is UDP-3-O-acylglucosamine N-acyltransferase, found in Phocaeicola vulgatus (strain ATCC 8482 / DSM 1447 / JCM 5826 / CCUG 4940 / NBRC 14291 / NCTC 11154) (Bacteroides vulgatus).